The chain runs to 113 residues: MYGATNDVNALGVVLSSSMATPSLDEEMAVEVASSENLPWMCIVWDDPVNLMSYVTYVFQTILGYSKKRATELMMQVHTEGKAVVSSGERDKVEADVKKLHTAGLWATMQQGG.

The protein belongs to the ClpS family. Binds to the N-terminal domain of the chaperone ClpA.

In terms of biological role, involved in the modulation of the specificity of the ClpAP-mediated ATP-dependent protein degradation. This chain is ATP-dependent Clp protease adapter protein ClpS, found in Corynebacterium diphtheriae (strain ATCC 700971 / NCTC 13129 / Biotype gravis).